The sequence spans 420 residues: Glutamyl-tRNA reductase (420 aa).

Substrate-binding positions include 49-52 (TCNR), serine 107, 112-114 (EPQ), and glutamine 118. Cysteine 50 acts as the Nucleophile in catalysis. Residue 187–192 (GAGETI) coordinates NADP(+).

It belongs to the glutamyl-tRNA reductase family. In terms of assembly, homodimer.

It catalyses the reaction (S)-4-amino-5-oxopentanoate + tRNA(Glu) + NADP(+) = L-glutamyl-tRNA(Glu) + NADPH + H(+). Its pathway is porphyrin-containing compound metabolism; protoporphyrin-IX biosynthesis; 5-aminolevulinate from L-glutamyl-tRNA(Glu): step 1/2. In terms of biological role, catalyzes the NADPH-dependent reduction of glutamyl-tRNA(Glu) to glutamate 1-semialdehyde (GSA). The protein is Glutamyl-tRNA reductase of Nitrosococcus oceani (strain ATCC 19707 / BCRC 17464 / JCM 30415 / NCIMB 11848 / C-107).